The primary structure comprises 55 residues: Large ribosomal subunit protein bL33 (55 aa).

The protein belongs to the bacterial ribosomal protein bL33 family.

The chain is Large ribosomal subunit protein bL33 from Acidothermus cellulolyticus (strain ATCC 43068 / DSM 8971 / 11B).